A 378-amino-acid polypeptide reads, in one-letter code: Ribosomal RNA large subunit methyltransferase G (378 aa).

This sequence belongs to the methyltransferase superfamily. RlmG family.

Its subcellular location is the cytoplasm. The catalysed reaction is guanosine(1835) in 23S rRNA + S-adenosyl-L-methionine = N(2)-methylguanosine(1835) in 23S rRNA + S-adenosyl-L-homocysteine + H(+). Its function is as follows. Specifically methylates the guanine in position 1835 (m2G1835) of 23S rRNA. The protein is Ribosomal RNA large subunit methyltransferase G of Salmonella heidelberg (strain SL476).